A 101-amino-acid chain; its full sequence is Chaperone modulatory protein CbpM (101 aa).

This sequence belongs to the CbpM family.

Functionally, interacts with CbpA and inhibits both the DnaJ-like co-chaperone activity and the DNA binding activity of CbpA. Together with CbpA, modulates the activity of the DnaK chaperone system. Does not inhibit the co-chaperone activity of DnaJ. This chain is Chaperone modulatory protein CbpM, found in Pseudomonas entomophila (strain L48).